A 155-amino-acid polypeptide reads, in one-letter code: UPF0461 protein C5orf24 homolog (155 aa).

Over residues 1 to 10 the composition is skewed to polar residues; the sequence is MMHPVASSNP. The disordered stretch occupies residues 1–20; it reads MMHPVASSNPAFCGPGKPSC. Residue Ser-37 is modified to Phosphoserine. The segment at 40 to 155 is disordered; that stretch reads SKYSHTVNHK…QQAFRCSSDA (116 aa). Residues 57–70 are compositionally biased toward polar residues; the sequence is DPLNETHLQTTSGR. Residue Lys-75 forms a Glycyl lysine isopeptide (Lys-Gly) (interchain with G-Cter in SUMO2) linkage. A compositionally biased stretch (basic residues) spans 80–92; that stretch reads KKKNLNRSGKRGR. Polar residues predominate over residues 94–107; that stretch reads SGTTKSAGYRTSTG. At Ser-121 the chain carries Phosphoserine.

The protein belongs to the UPF0461 family.

In Pongo abelii (Sumatran orangutan), this protein is UPF0461 protein C5orf24 homolog.